The following is a 469-amino-acid chain: Cell division protein FtsP (469 aa).

The segment at residues 1 to 27 is a signal peptide (tat-type signal); it reads MKLSRRQFLQRSTLAGVATVTPTSLWA.

Belongs to the FtsP family. Predicted to be exported by the Tat system. The position of the signal peptide cleavage has not been experimentally proven.

The protein resides in the periplasm. Cell division protein that is required for growth during stress conditions. May be involved in protecting or stabilizing the divisomal assembly under conditions of stress. In Glaesserella parasuis serovar 5 (strain SH0165) (Haemophilus parasuis), this protein is Cell division protein FtsP.